The sequence spans 61 residues: Large ribosomal subunit protein eL24 (61 aa).

4 residues coordinate Zn(2+): Cys-7, Cys-10, Cys-33, and Cys-37. A C4-type zinc finger spans residues 7–37 (CSFCGGDIPPATGMMHVRNDGTILWFCSNKC).

This sequence belongs to the eukaryotic ribosomal protein eL24 family. In terms of assembly, part of the 50S ribosomal subunit. Forms a cluster with proteins L3 and L14. The cofactor is Zn(2+).

Functionally, binds to the 23S rRNA. This chain is Large ribosomal subunit protein eL24, found in Metallosphaera sedula (strain ATCC 51363 / DSM 5348 / JCM 9185 / NBRC 15509 / TH2).